We begin with the raw amino-acid sequence, 161 residues long: Allophycocyanin alpha chain (161 aa).

The residue at position 71 (N71) is an N4-methylasparagine. Residue C81 participates in (2R,3E)-phycocyanobilin binding.

The protein belongs to the phycobiliprotein family. In terms of assembly, component of the phycobilisome. Heterodimer of an alpha and a beta chain. Contains one covalently linked phycocyanobilin chromophore.

The protein localises to the cellular thylakoid membrane. Light-harvesting photosynthetic bile pigment-protein from the phycobiliprotein complex. Allophycocyanin has a maximum absorption at approximately 650 nanometers. The polypeptide is Allophycocyanin alpha chain (apcA) (Arthrospira platensis (Spirulina platensis)).